We begin with the raw amino-acid sequence, 323 residues long: 8-oxo-dGDP phosphatase NUDT18 (323 aa).

Residues 37 to 167 (RLRKNVCYVV…DVLHLVELGA (131 aa)) enclose the Nudix hydrolase domain. L58 contacts Mg(2+). The Nudix box signature appears at 76-97 (GRMEPGETIVEAMQREVKEEAG).

Belongs to the Nudix hydrolase family. Mn(2+) serves as cofactor. Requires Mg(2+) as cofactor.

It carries out the reaction 8-oxo-dGDP + H2O = 8-oxo-dGMP + phosphate + H(+). The catalysed reaction is 8-oxo-dADP + H2O = 8-oxo-dAMP + phosphate + H(+). It catalyses the reaction 2-oxo-dADP + H2O = 2-oxo-dAMP + phosphate + H(+). The enzyme catalyses 8-oxo-GDP + H2O = 8-oxo-GMP + phosphate + H(+). Its function is as follows. Mediates the hydrolysis of oxidized nucleoside diphosphate derivatives. Hydrolyzes 8-oxo-7,8-dihydroguanine (8-oxo-Gua)-containing deoxyribo- and ribonucleoside diphosphates to the monophosphates. Hydrolyzes 8-oxo-dGDP and 8-oxo-GDP with the same efficiencies. Also hydrolyzes 8-OH-dADP and 2-OH-dADP. Exhibited no or minimal hydrolysis activity against 8-oxo-dGTP, 8-oxo-GTP, dGTP, GTP, dGDP and GDP. Probably removes oxidized guanine nucleotides from both the DNA and RNA precursor pools. In Mus musculus (Mouse), this protein is 8-oxo-dGDP phosphatase NUDT18.